The chain runs to 656 residues: Broad substrate specificity ATP-binding cassette transporter ABCG2 (656 aa).

Residues 1–25 are disordered; it reads MSSNSYQVSIPMSKRNTNGLPGSSS. The Cytoplasmic portion of the chain corresponds to 1-394; that stretch reads MSSNSYQVSI…SFKNLLGNPQ (394 aa). The ABC transporter domain maps to 37–286; it reads LSFHDICYRV…FASIGYNCEP (250 aa). ATP is bound by residues 80–87, 184–190, Glu211, and His243; these read GPTGGGKS and RGVSGGE. The ABC transmembrane type-2 domain occupies 390 to 652; sequence LGNPQASVAQ…TIAYLKLLLL (263 aa). Residues 395 to 415 traverse the membrane as a helical segment; that stretch reads ASVAQIIVTIILGLVIGAIFY. Topologically, residues 416-429 are extracellular; sequence DLKNDPSGIQNRAG. A helical transmembrane segment spans residues 430–450; it reads VLFFLTTNQCFSSVSAVELLV. The Cytoplasmic segment spans residues 451–478; sequence VEKKLFIHEYISGYYRVSSYFFGKLLSD. Residues 479-498 traverse the membrane as a helical segment; sequence LLPMRMLPSIIFTCITYFLL. Topologically, residues 499–507 are extracellular; the sequence is GLKPAVGSF. Residues 508–530 traverse the membrane as a helical segment; sequence FIMMFTLMMVAYSASSMALAIAA. Over 531-536 the chain is Cytoplasmic; the sequence is GQSVVS. The helical transmembrane segment at 537–557 threads the bilayer; that stretch reads VATLLMTISFVFMMIFSGLLV. The Extracellular segment spans residues 558–631; that stretch reads NLKTVVPWLS…LSAWGLWQNH (74 aa). Cys593 and Cys609 are joined by a disulfide. N-linked (GlcNAc...) asparagine glycans are attached at residues Asn597 and Asn601. A helical transmembrane segment spans residues 632-652; that stretch reads VALACMMVIFLTIAYLKLLLL. The Cytoplasmic segment spans residues 653-656; sequence KKYS.

This sequence belongs to the ABC transporter superfamily. ABCG family. Eye pigment precursor importer (TC 3.A.1.204) subfamily. Homodimer; disulfide-linked. The minimal functional unit is a homodimer, but the major oligomeric form in plasma membrane is a homotetramer with possibility of higher order oligomerization up to homododecamers. N-glycosylated. Glycosylation-deficient ABCG2 is normally expressed and functional. Post-translationally, phosphorylated. Phosphorylation may regulate the localization to the plasma membrane, the homooligomerization and therefore, the activity of the transporter. As to expression, high expression in brain, kidney and lung. Also expressed in livere, colon, small intestine, heart, skeletal muscle, spleen, stomach and pancreas.

The protein resides in the cell membrane. It is found in the apical cell membrane. It localises to the mitochondrion membrane. The enzyme catalyses ATP + H2O + xenobioticSide 1 = ADP + phosphate + xenobioticSide 2.. It carries out the reaction urate(in) + ATP + H2O = urate(out) + ADP + phosphate + H(+). The catalysed reaction is indoxyl sulfate(in) + ATP + H2O = indoxyl sulfate(out) + ADP + phosphate + H(+). It catalyses the reaction sphing-4-enine 1-phosphate(in) + ATP + H2O = sphing-4-enine 1-phosphate(out) + ADP + phosphate + H(+). The enzyme catalyses estrone 3-sulfate(in) + ATP + H2O = estrone 3-sulfate(out) + ADP + phosphate + H(+). It carries out the reaction dehydroepiandrosterone 3-sulfate(in) + ATP + H2O = dehydroepiandrosterone 3-sulfate(out) + ADP + phosphate + H(+). The catalysed reaction is 4-methylumbelliferone sulfate(in) + ATP + H2O = 4-methylumbelliferone sulfate(out) + ADP + phosphate + H(+). It catalyses the reaction 5,7-dimethyl-2-methylamino-4-(3-pyridylmethyl)-1,3-benzothiazol-6-yl beta-D-glucuronate(in) + ATP + H2O = 5,7-dimethyl-2-methylamino-4-(3-pyridylmethyl)-1,3-benzothiazol-6-yl beta-D-glucuronate(out) + ADP + phosphate + H(+). The enzyme catalyses 4-methylumbelliferone beta-D-glucuronate(in) + ATP + H2O = 4-methylumbelliferone beta-D-glucuronate(out) + ADP + phosphate + H(+). It carries out the reaction 5,7-dimethyl-2-methylamino-4-(3-pyridylmethyl)-1,3-benzothiazol-6-yl sulfate(in) + ATP + H2O = 5,7-dimethyl-2-methylamino-4-(3-pyridylmethyl)-1,3-benzothiazol-6-yl sulfate(out) + ADP + phosphate + H(+). The catalysed reaction is 17beta-estradiol 17-O-(beta-D-glucuronate)(in) + ATP + H2O = 17beta-estradiol 17-O-(beta-D-glucuronate)(out) + ADP + phosphate + H(+). It catalyses the reaction methotrexate(in) + ATP + H2O = methotrexate(out) + ADP + phosphate + H(+). The enzyme catalyses riboflavin(in) + ATP + H2O = riboflavin(out) + ADP + phosphate + H(+). It carries out the reaction pheophorbide a(in) + ATP + H2O = pheophorbide a(out) + ADP + phosphate + H(+). The catalysed reaction is itaconate(in) + ATP + H2O = itaconate(out) + ADP + phosphate + H(+). Its function is as follows. Broad substrate specificity ATP-dependent transporter of the ATP-binding cassette (ABC) family that actively extrudes a wide variety of physiological compounds, dietary toxins and xenobiotics from cells. Involved in porphyrin homeostasis, mediating the export of protoporphyrin IX (PPIX) from both mitochondria to cytosol and cytosol to extracellular space, it also functions in the cellular export of heme. Also mediates the efflux of sphingosine-1-P from cells. Acts as a urate exporter functioning in both renal and extrarenal urate excretion. In kidney, it also functions as a physiological exporter of the uremic toxin indoxyl sulfate. Also involved in the excretion of steroids like estrone 3-sulfate/E1S, 3beta-sulfooxy-androst-5-en-17-one/DHEAS, and other sulfate conjugates. Mediates the secretion of the riboflavin and biotin vitamins into milk. Extrudes pheophorbide a, a phototoxic porphyrin catabolite of chlorophyll, reducing its bioavailability. Plays an important role in the exclusion of xenobiotics from the brain. It confers to cells a resistance to multiple drugs and other xenobiotics including mitoxantrone, pheophorbide, camptothecin, methotrexate, azidothymidine, and the anthracyclines daunorubicin and doxorubicin, through the control of their efflux. In placenta, it limits the penetration of drugs from the maternal plasma into the fetus. May play a role in early stem cell self-renewal by blocking differentiation. In inflammatory macrophages, exports itaconate from the cytosol to the extracellular compartment and limits the activation of TFEB-dependent lysosome biogenesis involved in antibacterial innate immune response. This is Broad substrate specificity ATP-binding cassette transporter ABCG2 (ABCG2) from Sus scrofa (Pig).